A 369-amino-acid chain; its full sequence is Anhydro-N-acetylmuramic acid kinase (369 aa).

12 to 19 (GTSMDGVD) contacts ATP.

Belongs to the anhydro-N-acetylmuramic acid kinase family.

The enzyme catalyses 1,6-anhydro-N-acetyl-beta-muramate + ATP + H2O = N-acetyl-D-muramate 6-phosphate + ADP + H(+). The protein operates within amino-sugar metabolism; 1,6-anhydro-N-acetylmuramate degradation. It participates in cell wall biogenesis; peptidoglycan recycling. In terms of biological role, catalyzes the specific phosphorylation of 1,6-anhydro-N-acetylmuramic acid (anhMurNAc) with the simultaneous cleavage of the 1,6-anhydro ring, generating MurNAc-6-P. Is required for the utilization of anhMurNAc either imported from the medium or derived from its own cell wall murein, and thus plays a role in cell wall recycling. The polypeptide is Anhydro-N-acetylmuramic acid kinase (Shewanella woodyi (strain ATCC 51908 / MS32)).